Reading from the N-terminus, the 434-residue chain is Glutamate/glutamine/aspartate/asparagine transport system permease protein BztC (434 aa).

10 helical membrane-spanning segments follow: residues 41–61, 113–133, 135–155, 156–176, 180–200, 227–247, 272–292, 298–318, 360–380, and 398–418; these read LTVF…PWLL, LFVT…DALP, KLIW…WGGP, IWGP…FTAL, LGVP…WLYA, FLLA…LGIL, GVPL…FLPP, LILR…AEVI, IVSS…VGLF, and GTYW…NFSM. One can recognise an ABC transmembrane type-1 domain in the interval 227–422; it reads FLLALVIGVT…LFNFSMSRYS (196 aa).

This sequence belongs to the binding-protein-dependent transport system permease family. HisMQ subfamily. As to quaternary structure, bztB and BztC form a heterodimer which can form a membrane complex with a homodimer of BztD.

The protein localises to the cell inner membrane. Part of a binding-protein-dependent transport system for glutamate, glutamine, aspartate and asparagine. Probably responsible for the translocation of the substrate across the membrane. The chain is Glutamate/glutamine/aspartate/asparagine transport system permease protein BztC (bztC) from Rhodobacter capsulatus (strain ATCC BAA-309 / NBRC 16581 / SB1003).